Reading from the N-terminus, the 359-residue chain is MVPNYSTEETVKRIHVDCPVSGRHSYIYIMVPTVYSIIFIIGIFGNSLVVIVIYCYMKLKTVASIFLLNLALADLCFLITLPLWAAYTAMEYQWPFGNCLCKLASAGISFNLYASVFLLTCLSIDRYLAIVHPVKSRIRRTMFVARVTCIVIWLLAGVASLPVIIHRNIFFAENLNMTVCGFRYDNNNTTLRVGLGLSKNLLGFLIPFLIILTSYTLIWKTLKKAYQIQRNKTRNDDIFKMIVAIVFFFFFSWIPHQVFTFLDVLIQLHVITDCKITDIVDTAMPFTICIAYFNNCLNPFFYVFFGKNFKKYFLQLIKYIPPNVSTHPSLTTKMSSLSYRPPENIRLPTKKTAGSFDAE.

Over Met1–Ser25 the chain is Extracellular. An N-linked (GlcNAc...) asparagine glycan is attached at Asn4. Position 17 (Asp17) interacts with angiotensin II. 2 disulfide bridges follow: Cys18–Cys274 and Cys101–Cys180. A helical membrane pass occupies residues Tyr26–Cys55. The Cytoplasmic portion of the chain corresponds to Tyr56 to Thr61. The chain crosses the membrane as a helical span at residues Val62–Ala89. Residues Met90–Asn98 lie on the Extracellular side of the membrane. The chain crosses the membrane as a helical span at residues Cys99–Asp125. Over Arg126 to Thr141 the chain is Cytoplasmic. Residues Met142–Ile165 form a helical membrane-spanning segment. Residues His166–Thr190 lie on the Extracellular side of the membrane. Position 167 (Arg167) interacts with angiotensin II. Asn176 carries an N-linked (GlcNAc...) asparagine glycan. Phe182 and Tyr184 together coordinate angiotensin II. 2 N-linked (GlcNAc...) asparagine glycosylation sites follow: Asn187 and Asn188. Residues Leu191 to Thr216 form a helical membrane-spanning segment. Lys199 contacts angiotensin II. Residues Leu217 to Phe239 are Cytoplasmic-facing. A helical membrane pass occupies residues Lys240–Leu268. Over His269 to Asp278 the chain is Extracellular. Residues Ile279 to Phe304 form a helical membrane-spanning segment. The Cytoplasmic segment spans residues Phe305–Glu359.

The protein belongs to the G-protein coupled receptor 1 family. C-terminal Ser or Thr residues may be phosphorylated.

The protein resides in the cell membrane. Functionally, receptor for angiotensin II, a vasoconstricting peptide, which acts as a key regulator of blood pressure and sodium retention by the kidney. The activated receptor in turn couples to G-alpha proteins G(q) (GNAQ, GNA11, GNA14 or GNA15) and thus activates phospholipase C and increases the cytosolic Ca(2+) concentrations, which in turn triggers cellular responses such as stimulation of protein kinase C. This Gallus gallus (Chicken) protein is Type-1 angiotensin II receptor (AGTR1).